A 284-amino-acid polypeptide reads, in one-letter code: 2,3,4,5-tetrahydropyridine-2,6-dicarboxylate N-succinyltransferase (284 aa).

Arginine 111 and aspartate 148 together coordinate substrate.

This sequence belongs to the transferase hexapeptide repeat family. Homotrimer.

The protein resides in the cytoplasm. It carries out the reaction (S)-2,3,4,5-tetrahydrodipicolinate + succinyl-CoA + H2O = (S)-2-succinylamino-6-oxoheptanedioate + CoA. Its pathway is amino-acid biosynthesis; L-lysine biosynthesis via DAP pathway; LL-2,6-diaminopimelate from (S)-tetrahydrodipicolinate (succinylase route): step 1/3. This chain is 2,3,4,5-tetrahydropyridine-2,6-dicarboxylate N-succinyltransferase, found in Brucella suis (strain ATCC 23445 / NCTC 10510).